The following is a 354-amino-acid chain: UDP-N-acetylglucosamine--N-acetylmuramyl-(pentapeptide) pyrophosphoryl-undecaprenol N-acetylglucosamine transferase (354 aa).

UDP-N-acetyl-alpha-D-glucosamine-binding positions include 15 to 17 (TGG), Asn-127, Arg-163, Ser-191, Ile-244, 263 to 268 (ALTVSE), and Gln-288.

It belongs to the glycosyltransferase 28 family. MurG subfamily.

Its subcellular location is the cell inner membrane. The enzyme catalyses di-trans,octa-cis-undecaprenyl diphospho-N-acetyl-alpha-D-muramoyl-L-alanyl-D-glutamyl-meso-2,6-diaminopimeloyl-D-alanyl-D-alanine + UDP-N-acetyl-alpha-D-glucosamine = di-trans,octa-cis-undecaprenyl diphospho-[N-acetyl-alpha-D-glucosaminyl-(1-&gt;4)]-N-acetyl-alpha-D-muramoyl-L-alanyl-D-glutamyl-meso-2,6-diaminopimeloyl-D-alanyl-D-alanine + UDP + H(+). Its pathway is cell wall biogenesis; peptidoglycan biosynthesis. Cell wall formation. Catalyzes the transfer of a GlcNAc subunit on undecaprenyl-pyrophosphoryl-MurNAc-pentapeptide (lipid intermediate I) to form undecaprenyl-pyrophosphoryl-MurNAc-(pentapeptide)GlcNAc (lipid intermediate II). The protein is UDP-N-acetylglucosamine--N-acetylmuramyl-(pentapeptide) pyrophosphoryl-undecaprenol N-acetylglucosamine transferase of Aliivibrio fischeri (strain ATCC 700601 / ES114) (Vibrio fischeri).